The sequence spans 372 residues: 3-isopropylmalate dehydrogenase (372 aa).

79–90 (GPKWQGGAVRPE) contacts NAD(+). Substrate is bound by residues R97, R107, R136, and D225. 3 residues coordinate Mg(2+): D225, D250, and D254. 289–300 (GSAPDLPAGKAN) contacts NAD(+).

Belongs to the isocitrate and isopropylmalate dehydrogenases family. In terms of assembly, homodimer. Mg(2+) is required as a cofactor. The cofactor is Mn(2+).

Its subcellular location is the cytoplasm. The enzyme catalyses (2R,3S)-3-isopropylmalate + NAD(+) = 4-methyl-2-oxopentanoate + CO2 + NADH. Its pathway is amino-acid biosynthesis; L-leucine biosynthesis; L-leucine from 3-methyl-2-oxobutanoate: step 3/4. Its function is as follows. Catalyzes the oxidation of 3-carboxy-2-hydroxy-4-methylpentanoate (3-isopropylmalate) to 3-carboxy-4-methyl-2-oxopentanoate. The product decarboxylates to 4-methyl-2 oxopentanoate. The sequence is that of 3-isopropylmalate dehydrogenase (LEU2) from Eremothecium gossypii (strain ATCC 10895 / CBS 109.51 / FGSC 9923 / NRRL Y-1056) (Yeast).